A 486-amino-acid chain; its full sequence is Protein nucleotidyltransferase YdiU (486 aa).

ATP is bound by residues Gly-90, Gly-92, Arg-93, Lys-113, Asp-125, Gly-126, Arg-176, and Arg-183. Asp-252 functions as the Proton acceptor in the catalytic mechanism. The Mg(2+) site is built by Asn-253 and Asp-262. ATP is bound at residue Asp-262.

Belongs to the SELO family. Requires Mg(2+) as cofactor. Mn(2+) is required as a cofactor.

It carries out the reaction L-seryl-[protein] + ATP = 3-O-(5'-adenylyl)-L-seryl-[protein] + diphosphate. The catalysed reaction is L-threonyl-[protein] + ATP = 3-O-(5'-adenylyl)-L-threonyl-[protein] + diphosphate. It catalyses the reaction L-tyrosyl-[protein] + ATP = O-(5'-adenylyl)-L-tyrosyl-[protein] + diphosphate. The enzyme catalyses L-histidyl-[protein] + UTP = N(tele)-(5'-uridylyl)-L-histidyl-[protein] + diphosphate. It carries out the reaction L-seryl-[protein] + UTP = O-(5'-uridylyl)-L-seryl-[protein] + diphosphate. The catalysed reaction is L-tyrosyl-[protein] + UTP = O-(5'-uridylyl)-L-tyrosyl-[protein] + diphosphate. Functionally, nucleotidyltransferase involved in the post-translational modification of proteins. It can catalyze the addition of adenosine monophosphate (AMP) or uridine monophosphate (UMP) to a protein, resulting in modifications known as AMPylation and UMPylation. The sequence is that of Protein nucleotidyltransferase YdiU from Pseudomonas paraeruginosa (strain DSM 24068 / PA7) (Pseudomonas aeruginosa (strain PA7)).